A 493-amino-acid chain; its full sequence is Rop guanine nucleotide exchange factor 10 (493 aa).

Disordered regions lie at residues 1 to 45 (MFDG…RSDM) and 400 to 423 (GEAE…VVAA). Over residues 17–27 (DGMHTPEHELA) the composition is skewed to basic and acidic residues. The PRONE domain occupies 35-401 (RRGKQNRRSD…RLVQRQLMGE (367 aa)).

Functionally, guanine-nucleotide exchange factor (GEF) that acts as an activator of Rop (Rho of plants) GTPases by promoting the exchange of GDP for GTP. The sequence is that of Rop guanine nucleotide exchange factor 10 (ROPGEF10) from Arabidopsis thaliana (Mouse-ear cress).